Reading from the N-terminus, the 548-residue chain is DNA ligase (548 aa).

Residue Glu-244 participates in ATP binding. The active-site N6-AMP-lysine intermediate is Lys-246. Positions 251, 266, 295, 334, 405, and 411 each coordinate ATP.

The protein belongs to the ATP-dependent DNA ligase family. Mg(2+) is required as a cofactor.

The enzyme catalyses ATP + (deoxyribonucleotide)n-3'-hydroxyl + 5'-phospho-(deoxyribonucleotide)m = (deoxyribonucleotide)n+m + AMP + diphosphate.. DNA ligase that seals nicks in double-stranded DNA during DNA replication, DNA recombination and DNA repair. The protein is DNA ligase of Methanoculleus marisnigri (strain ATCC 35101 / DSM 1498 / JR1).